The primary structure comprises 247 residues: MAGHSKWANIKHRKAAQDAQRGKIFTKLIRELVTAAKIGGGDAGSNPRLRAAVDKALASNMTRDTINRAIDRGVGGGDDTNMETRVYEGYGPGGTAVMVECLSDNANRTISQVRPSFTKCGGNLGTEGSVGYLFNKKGLIIIDAGADEDALTEAAIEAGADDIQPQDDGSFEIYTAWEELGDVRDGIEKAGFKIAEAEVSMIPTTTVDLDAETAPKLLRLIDMLEDCDDVQNVYHNGEISDEVAALL.

This sequence belongs to the TACO1 family.

It localises to the cytoplasm. This is Probable transcriptional regulatory protein Asuc_1803 from Actinobacillus succinogenes (strain ATCC 55618 / DSM 22257 / CCUG 43843 / 130Z).